A 235-amino-acid polypeptide reads, in one-letter code: Uridylate kinase (235 aa).

9-12 lines the ATP pocket; it reads KLSG. The involved in allosteric activation by GTP stretch occupies residues 17–22; sequence GDQGYG. UMP is bound at residue Gly51. ATP is bound by residues Gly52 and Arg56. UMP contacts are provided by residues Asp71 and 132–139; that span reads CGNPFFTT. The ATP site is built by Thr159, Tyr165, and Asp168.

The protein belongs to the UMP kinase family. Homohexamer.

The protein localises to the cytoplasm. It carries out the reaction UMP + ATP = UDP + ADP. The protein operates within pyrimidine metabolism; CTP biosynthesis via de novo pathway; UDP from UMP (UMPK route): step 1/1. Its activity is regulated as follows. Allosterically activated by GTP. Inhibited by UTP. In terms of biological role, catalyzes the reversible phosphorylation of UMP to UDP. The chain is Uridylate kinase from Synechococcus sp. (strain WH7803).